A 397-amino-acid chain; its full sequence is ORC1-type DNA replication protein 1 (397 aa).

ATP is bound by residues 67–71 (TGKTA), tyrosine 208, and arginine 220.

Belongs to the CDC6/cdc18 family.

In terms of biological role, involved in regulation of DNA replication. In Sulfolobus acidocaldarius (strain ATCC 33909 / DSM 639 / JCM 8929 / NBRC 15157 / NCIMB 11770), this protein is ORC1-type DNA replication protein 1 (cdc6-1).